The following is a 126-amino-acid chain: Large ribosomal subunit protein bL12 (126 aa).

It belongs to the bacterial ribosomal protein bL12 family. Homodimer. Part of the ribosomal stalk of the 50S ribosomal subunit. Forms a multimeric L10(L12)X complex, where L10 forms an elongated spine to which 2 to 4 L12 dimers bind in a sequential fashion. Binds GTP-bound translation factors.

Its function is as follows. Forms part of the ribosomal stalk which helps the ribosome interact with GTP-bound translation factors. Is thus essential for accurate translation. This is Large ribosomal subunit protein bL12 from Caulobacter sp. (strain K31).